A 306-amino-acid polypeptide reads, in one-letter code: Glutathione transport system permease protein GsiC (306 aa).

The Cytoplasmic portion of the chain corresponds to 1 to 8 (MLNYFIKR). Residues 9-29 (LLGLIPTLLIVMVLVFLFVHL) form a helical membrane-spanning segment. Over 30–98 (LPGDPARLAA…QEIALRFMPT (69 aa)) the chain is Periplasmic. An ABC transmembrane type-1 domain is found at 95 to 292 (FMPTFWLTVC…LEFILINLLV (198 aa)). A helical transmembrane segment spans residues 99 to 119 (FWLTVCSMAWAVIFGMAIGIV). At 120-130 (SAVWRNGWPDR) the chain is on the cytoplasmic side. The chain crosses the membrane as a helical span at residues 131-151 (IGMTLAVSGLSFPAFALGMLL). Residues 152–168 (MQIFSVELGWLPTVGAD) lie on the Periplasmic side of the membrane. The helical transmembrane segment at 169–189 (TWLHYILPSLTLGAAVAAVMA) threads the bilayer. Residues 190–228 (RFTRASFVDVLQEDYMRTARAKGVRESLVVLKHGLRNAL) are Cytoplasmic-facing. Residues 229-249 (IPVVTMMGLQFGFLLGGSIVV) form a helical membrane-spanning segment. Topologically, residues 250-278 (EKVFNWPGLGRLLVDSVEMRDYPVIQAEV) are periplasmic. The chain crosses the membrane as a helical span at residues 279-299 (LLFSLEFILINLLVDMLYAAI). At 300-306 (NPAIRYK) the chain is on the cytoplasmic side.

Belongs to the binding-protein-dependent transport system permease family. The complex is composed of two ATP-binding proteins (GsiA), two transmembrane proteins (GsiC and GsiD) and a solute-binding protein (GsiB).

Its subcellular location is the cell inner membrane. In terms of biological role, part of the ABC transporter complex GsiABCD involved in glutathione import. Probably responsible for the translocation of the substrate across the membrane. The sequence is that of Glutathione transport system permease protein GsiC from Pectobacterium atrosepticum (strain SCRI 1043 / ATCC BAA-672) (Erwinia carotovora subsp. atroseptica).